The sequence spans 104 residues: uncharacterized protein (104 aa).

This is an uncharacterized protein from Galliformes (FAdV-1).